The chain runs to 155 residues: Nuclear cap-binding protein subunit 2 (155 aa).

MRNA contacts are provided by residues tyrosine 19, tyrosine 42, 111 to 115 (RTDWD), 122 to 126 (RQYGR), and 132 to 133 (QV). The region spanning 39 to 117 (ATLYVGNLSF…RIIRTDWDAG (79 aa)) is the RRM domain. The segment at 121 to 155 (GRQYGRGKSGGQVRDEYRQDYDPARGGYGKMVQKS) is disordered. Basic and acidic residues predominate over residues 133–143 (VRDEYRQDYDP).

The protein belongs to the RRM NCBP2 family. Component of the nuclear cap-binding complex (CBC), a heterodimer composed of ncbp1/cbp80 and ncbp2/cbp20 that interacts with m7GpppG-capped RNA.

The protein localises to the nucleus. The protein resides in the cytoplasm. Functionally, component of the cap-binding complex (CBC), which binds co-transcriptionally to the 5' cap of pre-mRNAs and is involved in various processes such as pre-mRNA splicing, translation regulation, nonsense-mediated mRNA decay, RNA-mediated gene silencing (RNAi) by microRNAs (miRNAs) and mRNA export. The CBC complex is involved in mRNA export from the nucleus, leading to the recruitment of the mRNA export machinery to the 5' end of mRNA and to mRNA export in a 5' to 3' direction through the nuclear pore. The CBC complex is also involved in mediating U snRNA and intronless mRNAs export from the nucleus. The CBC complex is essential for a pioneer round of mRNA translation, before steady state translation when the CBC complex is replaced by cytoplasmic cap-binding protein eIF4E. The pioneer round of mRNA translation mediated by the CBC complex plays a central role in nonsense-mediated mRNA decay (NMD), NMD only taking place in mRNAs bound to the CBC complex, but not on eIF4E-bound mRNAs. The CBC complex enhances NMD in mRNAs containing at least one exon-junction complex (EJC), promoting the interaction between upf1 and upf2. The CBC complex is also involved in 'failsafe' NMD, which is independent of the EJC complex, while it does not participate in Staufen-mediated mRNA decay (SMD). During cell proliferation, the CBC complex is also involved in microRNAs (miRNAs) biogenesis via its interaction with srrt/ars2, thereby being required for miRNA-mediated RNA interference. The CBC complex also acts as a negative regulator of parn, thereby acting as an inhibitor of mRNA deadenylation. In the CBC complex, ncbp2/cbp20 recognizes and binds capped RNAs (m7GpppG-capped RNA) but requires ncbp1/cbp80 to stabilize the movement of its N-terminal loop and lock the CBC into a high affinity cap-binding state with the cap structure. The conventional cap-binding complex with NCBP2 binds both small nuclear RNA (snRNA) and messenger (mRNA) and is involved in their export from the nucleus. This chain is Nuclear cap-binding protein subunit 2 (ncbp2), found in Danio rerio (Zebrafish).